We begin with the raw amino-acid sequence, 43 residues long: Protein PsbN (43 aa).

Residues 5-27 traverse the membrane as a helical segment; the sequence is NLVTISISCLLVSLTGYAIYTSF.

The protein belongs to the PsbN family.

The protein resides in the plastid. It is found in the chloroplast thylakoid membrane. May play a role in photosystem I and II biogenesis. The polypeptide is Protein PsbN (Gnetum gnemon (Spanish joint-fir)).